Consider the following 1188-residue polypeptide: DNA-directed RNA polymerase subunit beta (1188 aa).

Belongs to the RNA polymerase beta chain family. In terms of assembly, the RNAP catalytic core consists of 2 alpha, 1 beta, 1 beta' and 1 omega subunit. When a sigma factor is associated with the core the holoenzyme is formed, which can initiate transcription.

It carries out the reaction RNA(n) + a ribonucleoside 5'-triphosphate = RNA(n+1) + diphosphate. DNA-dependent RNA polymerase catalyzes the transcription of DNA into RNA using the four ribonucleoside triphosphates as substrates. This Streptococcus pyogenes serotype M3 (strain ATCC BAA-595 / MGAS315) protein is DNA-directed RNA polymerase subunit beta.